A 400-amino-acid polypeptide reads, in one-letter code: MSSILSIKDIDLAKKKVFIRCDFNVPQDEFLNITDDRRIRSAIPTIRYCLDNGCAVILASHLGRPKEIASKYSLEPVAKRLARLMAKDVIMAKDVIGEDAKKKASELKSSEILLLENLRFEKGETKNDENLAKELASMADVYINDAFGVCHRAHASVEAITKYFDNTHKGAGFLLQKEIEFASNLIKHPARPFVAVVGGSKVSGKLQALTNLLPKVDKLIIGGGMAFTFLKAQGYDIGNSLLEEDLIEEANKILLKGKNLGVKIYLPVDVTAAQTCSQEAVMKYTPVQEIPAGWMGLDIGPASVRLFKEALSDAQTIWWNGPMGVFEIDKFSKGSIKMSHYISESHATTVIGGGDTADVVARAGDADEMTFISTGGGASLELIEGKELPGVKPLTIKDSE.

Substrate contacts are provided by residues 22 to 24 (DFN), R38, 61 to 64 (HLGR), R119, and R152. ATP contacts are provided by residues K205, G296, E327, and 353-356 (GGDT).

The protein belongs to the phosphoglycerate kinase family. In terms of assembly, monomer.

The protein localises to the cytoplasm. The catalysed reaction is (2R)-3-phosphoglycerate + ATP = (2R)-3-phospho-glyceroyl phosphate + ADP. It participates in carbohydrate degradation; glycolysis; pyruvate from D-glyceraldehyde 3-phosphate: step 2/5. The protein is Phosphoglycerate kinase of Campylobacter lari (strain RM2100 / D67 / ATCC BAA-1060).